Reading from the N-terminus, the 248-residue chain is tRNA (guanine-N(1)-)-methyltransferase (248 aa).

Residues Gly-113 and 133 to 138 contribute to the S-adenosyl-L-methionine site; that span reads IGDYVL.

This sequence belongs to the RNA methyltransferase TrmD family. As to quaternary structure, homodimer.

It is found in the cytoplasm. It catalyses the reaction guanosine(37) in tRNA + S-adenosyl-L-methionine = N(1)-methylguanosine(37) in tRNA + S-adenosyl-L-homocysteine + H(+). Its function is as follows. Specifically methylates guanosine-37 in various tRNAs. The protein is tRNA (guanine-N(1)-)-methyltransferase of Shewanella baltica (strain OS223).